Consider the following 624-residue polypeptide: MKGQETRGFQSEVKQLLHLMIHSLYSNKEIFLRELISNASDAADKLRFRALSNPDLYEGDGELRVRVSFDKDKRTLTISDNGVGMTRDEVIDHLGTIAKSGTKSFLESLGSDQAKDSQLIGQFGVGFYSAFIVADKVTVRTRAAGEKPENGVFWESAGEGEYTVADITKEDRGTEITLHLREGEDEFLDDWRVRSIISKYSDHIALPVEIEKREEKDGETVISWEKINKAQALWTRNKSEITDEEYKEFYKHIAHDFNDPLTWSHNRVEGKQEYTSLLYIPSQAPWDMWNRDHKHGLKLYVQRVFIMDDAEQFMPNYLRFVRGLIDSSDLPLNVSREILQDSTVTRNLRNALTKRVLQMLEKLAKDDAEKYQTFWQQFGLVLKEGPAEDFANQEAIAKLLRFASTYTDSSAQTVSLEDYVSRMKEGQEKIYYITADSYAAAKSSPHLELLRKKGIEVLLLSDRIDEWMMNYLTEFDGKPFQSVSKVDESLEKLADEVDESAKEAEKALTPFIDRVKALLGERVKDVRLTHRLTDTPAIVSTDADEMSTQMAKLFAAAGQKVPEVKYIFELNPDHVLVKRAADTEDEAKFSEWVELLLDQALLAERGTLEDPNLFIRRMNQLLVS.

The a; substrate-binding stretch occupies residues 1–336 (MKGQETRGFQ…SSDLPLNVSR (336 aa)). A b region spans residues 337 to 552 (EILQDSTVTR…ADEMSTQMAK (216 aa)). A c region spans residues 553–624 (LFAAAGQKVP…IRRMNQLLVS (72 aa)).

This sequence belongs to the heat shock protein 90 family. In terms of assembly, homodimer.

Its subcellular location is the cytoplasm. Its function is as follows. Molecular chaperone. Has ATPase activity. The chain is Chaperone protein HtpG from Escherichia coli O139:H28 (strain E24377A / ETEC).